Consider the following 121-residue polypeptide: Copper transport protein CCH (121 aa).

Ala-2 carries the post-translational modification N-acetylalanine. The 64-residue stretch at 2-65 (AQTVVLKVGM…TVSKTGKKTS (64 aa)) folds into the HMA domain. Cu cation contacts are provided by Cys-13 and Cys-16. A disordered region spans residues 70 to 121 (EAEAEPKAEADPKVETVTETKTEAETKTEAKVDAKADVEPKAAEAETKPSQV). A compositionally biased stretch (basic and acidic residues) spans 73-121 (AEPKAEADPKVETVTETKTEAETKTEAKVDAKADVEPKAAEAETKPSQV).

This sequence belongs to the ATX1 family. Cu cation is required as a cofactor. Expressed in phloem (at protein level).

In terms of biological role, involved in copper homeostasis. Can complement the yeast mutants atx1 and sod1. This chain is Copper transport protein CCH (CCH), found in Arabidopsis thaliana (Mouse-ear cress).